The primary structure comprises 398 residues: 4-hydroxy-3-methylbut-2-enyl diphosphate reductase (398 aa).

Cysteine 66 contacts [4Fe-4S] cluster. Histidine 96 provides a ligand contact to (2E)-4-hydroxy-3-methylbut-2-enyl diphosphate. Dimethylallyl diphosphate is bound at residue histidine 96. Histidine 96 provides a ligand contact to isopentenyl diphosphate. Position 157 (cysteine 157) interacts with [4Fe-4S] cluster. Histidine 185 is a binding site for (2E)-4-hydroxy-3-methylbut-2-enyl diphosphate. Dimethylallyl diphosphate is bound at residue histidine 185. Isopentenyl diphosphate is bound at residue histidine 185. Glutamate 187 serves as the catalytic Proton donor. Threonine 250 provides a ligand contact to (2E)-4-hydroxy-3-methylbut-2-enyl diphosphate. A [4Fe-4S] cluster-binding site is contributed by cysteine 288. 4 residues coordinate (2E)-4-hydroxy-3-methylbut-2-enyl diphosphate: serine 317, serine 318, asparagine 319, and serine 380. Serine 317, serine 318, asparagine 319, and serine 380 together coordinate dimethylallyl diphosphate. Positions 317, 318, 319, and 380 each coordinate isopentenyl diphosphate.

Belongs to the IspH family. [4Fe-4S] cluster is required as a cofactor.

It carries out the reaction isopentenyl diphosphate + 2 oxidized [2Fe-2S]-[ferredoxin] + H2O = (2E)-4-hydroxy-3-methylbut-2-enyl diphosphate + 2 reduced [2Fe-2S]-[ferredoxin] + 2 H(+). The enzyme catalyses dimethylallyl diphosphate + 2 oxidized [2Fe-2S]-[ferredoxin] + H2O = (2E)-4-hydroxy-3-methylbut-2-enyl diphosphate + 2 reduced [2Fe-2S]-[ferredoxin] + 2 H(+). It participates in isoprenoid biosynthesis; dimethylallyl diphosphate biosynthesis; dimethylallyl diphosphate from (2E)-4-hydroxy-3-methylbutenyl diphosphate: step 1/1. It functions in the pathway isoprenoid biosynthesis; isopentenyl diphosphate biosynthesis via DXP pathway; isopentenyl diphosphate from 1-deoxy-D-xylulose 5-phosphate: step 6/6. Its function is as follows. Catalyzes the conversion of 1-hydroxy-2-methyl-2-(E)-butenyl 4-diphosphate (HMBPP) into a mixture of isopentenyl diphosphate (IPP) and dimethylallyl diphosphate (DMAPP). Acts in the terminal step of the DOXP/MEP pathway for isoprenoid precursor biosynthesis. The chain is 4-hydroxy-3-methylbut-2-enyl diphosphate reductase from Prochlorococcus marinus (strain MIT 9301).